A 302-amino-acid polypeptide reads, in one-letter code: 4-diphosphocytidyl-2-C-methyl-D-erythritol kinase (302 aa).

Lys11 is an active-site residue. 93-103 (PVASGLAGGST) contributes to the ATP binding site. Residue Asp135 is part of the active site.

This sequence belongs to the GHMP kinase family. IspE subfamily.

It carries out the reaction 4-CDP-2-C-methyl-D-erythritol + ATP = 4-CDP-2-C-methyl-D-erythritol 2-phosphate + ADP + H(+). Its pathway is isoprenoid biosynthesis; isopentenyl diphosphate biosynthesis via DXP pathway; isopentenyl diphosphate from 1-deoxy-D-xylulose 5-phosphate: step 3/6. Catalyzes the phosphorylation of the position 2 hydroxy group of 4-diphosphocytidyl-2C-methyl-D-erythritol. The sequence is that of 4-diphosphocytidyl-2-C-methyl-D-erythritol kinase from Gloeobacter violaceus (strain ATCC 29082 / PCC 7421).